The primary structure comprises 337 residues: Ketol-acid reductoisomerase (NADP(+)) (337 aa).

One can recognise a KARI N-terminal Rossmann domain in the interval 1–183; the sequence is MAIETLYDSD…GGARAGVIPT (183 aa). Residues 26-29, R49, S52, S54, and 84-87 each bind NADP(+); these read YGSQ and DTSQ. H109 is an active-site residue. G135 is an NADP(+) binding site. One can recognise a KARI C-terminal knotted domain in the interval 184 to 329; it reads TFKDETETDL…SQLRDLMSWV (146 aa). The Mg(2+) site is built by D192, E196, E228, and E232. S253 is a substrate binding site.

It belongs to the ketol-acid reductoisomerase family. The cofactor is Mg(2+).

It carries out the reaction (2R)-2,3-dihydroxy-3-methylbutanoate + NADP(+) = (2S)-2-acetolactate + NADPH + H(+). The catalysed reaction is (2R,3R)-2,3-dihydroxy-3-methylpentanoate + NADP(+) = (S)-2-ethyl-2-hydroxy-3-oxobutanoate + NADPH + H(+). It functions in the pathway amino-acid biosynthesis; L-isoleucine biosynthesis; L-isoleucine from 2-oxobutanoate: step 2/4. It participates in amino-acid biosynthesis; L-valine biosynthesis; L-valine from pyruvate: step 2/4. Its function is as follows. Involved in the biosynthesis of branched-chain amino acids (BCAA). Catalyzes an alkyl-migration followed by a ketol-acid reduction of (S)-2-acetolactate (S2AL) to yield (R)-2,3-dihydroxy-isovalerate. In the isomerase reaction, S2AL is rearranged via a Mg-dependent methyl migration to produce 3-hydroxy-3-methyl-2-ketobutyrate (HMKB). In the reductase reaction, this 2-ketoacid undergoes a metal-dependent reduction by NADPH to yield (R)-2,3-dihydroxy-isovalerate. The sequence is that of Ketol-acid reductoisomerase (NADP(+)) from Corynebacterium aurimucosum (strain ATCC 700975 / DSM 44827 / CIP 107346 / CN-1) (Corynebacterium nigricans).